Consider the following 335-residue polypeptide: Phosphatidylcholine:ceramide cholinephosphotransferase 2 (335 aa).

Transmembrane regions (helical) follow at residues Leu-60–Ile-80, Trp-104–Leu-124, Phe-136–Pro-156, Ile-200–Val-220, and Leu-229–Val-249. His-210 is a catalytic residue. Residues His-253 and Asp-257 contribute to the active site. The helical transmembrane segment at Val-258–Met-278 threads the bilayer. The Cytoplasmic segment spans residues Arg-279 to Gln-335.

The protein belongs to the sphingomyelin synthase family.

The protein localises to the membrane. The enzyme catalyses an N-acylsphing-4-enine + a 1,2-diacyl-sn-glycero-3-phosphocholine = a sphingomyelin + a 1,2-diacyl-sn-glycerol. It carries out the reaction an N-acyl-15-methylhexadecasphing-4-enine + a 1,2-diacyl-sn-glycero-3-phosphocholine = an N-acyl-15-methylhexadecasphing-4-enine-1-phosphocholine + a 1,2-diacyl-sn-glycerol. The protein operates within lipid metabolism; sphingolipid metabolism. Its function is as follows. Sphingomyelin synthases (SM synthase or SMS) synthesize the sphingolipid sphingomyelin (SM) through transfer of the phosphatidyl head group of 1,2-diacyl-sn-glycero-3-phosphocholine (phosphatidylcholine, PC) on to the primary hydroxyl of ceramide (N-acylsphingoid base), yielding 1,2-diacyl-sn-glycerol (diacylglycerol, DAG) as a side product. Functions as a bidirectional lipid cholinephosphotransferases capable of converting PC and ceramide to SM and DAG and vice versa depending on the respective levels of ceramide and DAG as phosphocholine acceptors, respectively. The polypeptide is Phosphatidylcholine:ceramide cholinephosphotransferase 2 (sms-2) (Caenorhabditis elegans).